A 269-amino-acid polypeptide reads, in one-letter code: 3-methyl-2-oxobutanoate hydroxymethyltransferase (269 aa).

Residues Asp42 and Asp81 each coordinate Mg(2+). 3-methyl-2-oxobutanoate contacts are provided by residues 42–43, Asp81, and Lys111; that span reads DS. Glu113 is a Mg(2+) binding site. Glu179 (proton acceptor) is an active-site residue. Residues 250–269 form a disordered region; that stretch reads SGEFPRESHSHTEDELDDLY. The span at 252-262 shows a compositional bias: basic and acidic residues; it reads EFPRESHSHTE.

Belongs to the PanB family. In terms of assembly, homodecamer; pentamer of dimers. Mg(2+) is required as a cofactor.

The protein resides in the cytoplasm. It catalyses the reaction 3-methyl-2-oxobutanoate + (6R)-5,10-methylene-5,6,7,8-tetrahydrofolate + H2O = 2-dehydropantoate + (6S)-5,6,7,8-tetrahydrofolate. It participates in cofactor biosynthesis; coenzyme A biosynthesis. In terms of biological role, catalyzes the reversible reaction in which hydroxymethyl group from 5,10-methylenetetrahydrofolate is transferred onto alpha-ketoisovalerate to form ketopantoate. This Haloarcula marismortui (strain ATCC 43049 / DSM 3752 / JCM 8966 / VKM B-1809) (Halobacterium marismortui) protein is 3-methyl-2-oxobutanoate hydroxymethyltransferase.